Consider the following 777-residue polypeptide: Zinc finger FYVE domain-containing protein 1 (777 aa).

A required for localization in the lipid droplets region spans residues 416–777 (MAHSSFFPDE…FNCNKKPGDL (362 aa)). FYVE-type zinc fingers lie at residues 598–659 (NSQI…DARN) and 715–775 (DHEI…KKPG). The Zn(2+) site is built by Cys-604, Cys-607, Cys-620, Cys-623, Cys-628, Cys-631, Cys-651, Cys-654, Cys-721, Cys-724, Cys-737, Cys-740, Cys-745, Cys-748, Cys-767, and Cys-770.

In terms of assembly, interacts with RAB18 (in GTP-bound form). Interacts with BSCL2 in a RAB18-dependent manner. Interacts with ZW10. Ubiquitous.

It is found in the golgi apparatus. Its subcellular location is the golgi stack. The protein localises to the endoplasmic reticulum. The protein resides in the preautophagosomal structure. It localises to the lipid droplet. It is found in the mitochondrion. Functionally, plays a role in the formation of lipid droplets (LDs) which are storage organelles at the center of lipid and energy homeostasis. Regulates the morphology, size and distribution of LDs. Mediates the formation of endoplasmic reticulum-lipid droplets (ER-LD) contact sites by forming a complex with RAB18 and ZW10. Binds to phosphatidylinositol 3-phosphate (PtdIns3P) through FYVE-type zinc finger. The protein is Zinc finger FYVE domain-containing protein 1 (Zfyve1) of Mus musculus (Mouse).